Here is a 217-residue protein sequence, read N- to C-terminus: Cytidylate kinase (217 aa).

An ATP-binding site is contributed by 10–18; the sequence is GPAGAGKST.

Belongs to the cytidylate kinase family. Type 1 subfamily.

The protein resides in the cytoplasm. The catalysed reaction is CMP + ATP = CDP + ADP. The enzyme catalyses dCMP + ATP = dCDP + ADP. This is Cytidylate kinase from Clostridium botulinum (strain Okra / Type B1).